Here is a 250-residue protein sequence, read N- to C-terminus: Tumor necrosis factor ligand superfamily member 13 (250 aa).

The propeptide occupies methionine 1 to arginine 104. Disordered regions lie at residues glutamate 61–serine 82 and aspartate 89–threonine 108. Residues serine 116–leucine 250 enclose the THD domain. N-linked (GlcNAc...) asparagine glycosylation occurs at asparagine 124. Cysteines 196 and 211 form a disulfide.

The protein belongs to the tumor necrosis factor family. As to quaternary structure, homotrimer. Post-translationally, the precursor is cleaved by furin. As to expression, expressed at high levels in transformed cell lines, cancers of colon, thyroid, lymphoid tissues and specifically expressed in monocytes and macrophages.

The protein localises to the secreted. Functionally, cytokine that binds to TNFRSF13B/TACI and to TNFRSF17/BCMA. Plays a role in the regulation of tumor cell growth. May be involved in monocyte/macrophage-mediated immunological processes. This is Tumor necrosis factor ligand superfamily member 13 (TNFSF13) from Homo sapiens (Human).